Here is a 388-residue protein sequence, read N- to C-terminus: Flavin oxidoreductase hxnT (388 aa).

Belongs to the NADH:flavin oxidoreductase/NADH oxidase family. The cofactor is FMN.

Its function is as follows. Flavin oxidoreductase, part of the hnx cluster involved in the purine degradation. The nicotinate hydroxylase hnxS accepts nicotinate as a substrate and catalyzes the first step of nicotinate catabolism. The major facilitator-type transporters hxnP and hxnZ are probably involved in the uptake of nicotinate-derived metabolites, and the oxidoreductases hxnT and hxnY in the further metabolism of 6-OH nicotinic acid. The polypeptide is Flavin oxidoreductase hxnT (Emericella nidulans (strain FGSC A4 / ATCC 38163 / CBS 112.46 / NRRL 194 / M139) (Aspergillus nidulans)).